The following is a 184-amino-acid chain: FMRFamide-related peptides (184 aa).

A propeptide spanning residues 1-44 is cleaved from the precursor; the sequence is MLVSSSVLKDDSSLRIFKESPNEFEYIIKRHDMDDRKEDTESKE. Phenylalanine 56 carries the phenylalanine amide modification. The propeptide occupies 59–83; the sequence is GQSFFNNLDNSAFDNEIDSKVSRHP. Phenylalanine 94 carries the post-translational modification Phenylalanine amide. Residues 97 to 107 constitute a propeptide that is removed on maturation; it reads SGMKSTNDEQP. Residue phenylalanine 119 is modified to Phenylalanine amide. Residues 122-184 constitute a propeptide that is removed on maturation; it reads NIQIVPTDFD…SLETNSNHRE (63 aa).

The protein belongs to the FARP (FMRFamide related peptide) family. As to expression, expressed throughout the central nervous system.

It is found in the secreted. In terms of biological role, in insects, FMRFamide and related peptides have modulatory actions at skeletal neuromuscular junctions, and peptides that are immunologically related to FMRFamide are released into the circulation from neurohemal organs. The protein is FMRFamide-related peptides of Camponotus floridanus (Florida carpenter ant).